The sequence spans 434 residues: Probable carboxypeptidase BDBG_01803 (434 aa).

A signal peptide spans 1 to 20 (MKLSHLAAALSAQLVAPVAA). 3 N-linked (GlcNAc...) asparagine glycosylation sites follow: Asn35, Asn136, and Asn150. Residue Asp160 coordinates Zn(2+). The Proton acceptor role is filled by Glu192. Residue Glu193 coordinates Zn(2+). The N-linked (GlcNAc...) asparagine glycan is linked to Asn343.

This sequence belongs to the peptidase M20A family. The cofactor is Zn(2+).

It is found in the secreted. The protein is Probable carboxypeptidase BDBG_01803 of Blastomyces gilchristii (strain SLH14081) (Blastomyces dermatitidis).